Consider the following 322-residue polypeptide: MYQPPEASCWTGRVDSVSDERAFRLHQRIRLLDLSGPLTPLEQAAAFIGFVCDEGVRRNQGRQGAKEAPAAVKAALARLPWHLPSGASIYDAGDIVCADGRLEQSQAELGKAIARLLQSGVAPVVIGGGHETAYGHYLGVRAALGPNARLGIINIDAHFDLRPYDNGPTSGTMFRQILDEDKQVGYCCLGIQRLGNTAALFADAERYGCEYILEEQLTAGAIEAAYERIEQFASRHDSVILTICMDAISAAAAPGVSAPSPFGLSPSLARALIRRIVSHPKTISVDLCEVNPLVDEGGKTVALAAAFCMEALLHFRRLQPRR.

The Mn(2+) site is built by histidine 130, aspartate 156, histidine 158, aspartate 160, cysteine 244, and aspartate 246.

This sequence belongs to the arginase family. Mn(2+) serves as cofactor.

The enzyme catalyses N-formimidoyl-L-glutamate + H2O = formamide + L-glutamate. It participates in amino-acid degradation; L-histidine degradation into L-glutamate; L-glutamate from N-formimidoyl-L-glutamate (hydrolase route): step 1/1. In terms of biological role, catalyzes the conversion of N-formimidoyl-L-glutamate to L-glutamate and formamide. The chain is Formimidoylglutamase from Geobacillus thermodenitrificans (strain NG80-2).